A 64-amino-acid polypeptide reads, in one-letter code: Probable tautomerase lp_1712 (64 aa).

Pro2 functions as the Proton acceptor; via imino nitrogen in the catalytic mechanism.

This sequence belongs to the 4-oxalocrotonate tautomerase family.

This Lactiplantibacillus plantarum (strain ATCC BAA-793 / NCIMB 8826 / WCFS1) (Lactobacillus plantarum) protein is Probable tautomerase lp_1712.